Reading from the N-terminus, the 252-residue chain is Imidazole glycerol phosphate synthase subunit HisF (252 aa).

Residues Asp11 and Asp130 contribute to the active site.

This sequence belongs to the HisA/HisF family. As to quaternary structure, heterodimer of HisH and HisF.

Its subcellular location is the cytoplasm. It catalyses the reaction 5-[(5-phospho-1-deoxy-D-ribulos-1-ylimino)methylamino]-1-(5-phospho-beta-D-ribosyl)imidazole-4-carboxamide + L-glutamine = D-erythro-1-(imidazol-4-yl)glycerol 3-phosphate + 5-amino-1-(5-phospho-beta-D-ribosyl)imidazole-4-carboxamide + L-glutamate + H(+). The protein operates within amino-acid biosynthesis; L-histidine biosynthesis; L-histidine from 5-phospho-alpha-D-ribose 1-diphosphate: step 5/9. Functionally, IGPS catalyzes the conversion of PRFAR and glutamine to IGP, AICAR and glutamate. The HisF subunit catalyzes the cyclization activity that produces IGP and AICAR from PRFAR using the ammonia provided by the HisH subunit. The chain is Imidazole glycerol phosphate synthase subunit HisF from Persephonella marina (strain DSM 14350 / EX-H1).